A 569-amino-acid chain; its full sequence is uncharacterized protein (569 aa).

The signal sequence occupies residues 1–22 (MSLLVKAALILKCASMLQGVSA). The disordered stretch occupies residues 498 to 541 (RETSILDSTNTTSTNATNTTTTTSSSSTASSSASASSSTSATSG). Residues 505 to 540 (STNTTSTNATNTTTTTSSSSTASSSASASSSTSATS) are compositionally biased toward low complexity.

The protein localises to the secreted. It is found in the cell surface. This is an uncharacterized protein from Schizosaccharomyces pombe (strain 972 / ATCC 24843) (Fission yeast).